Consider the following 434-residue polypeptide: Glutamyl-tRNA reductase (434 aa).

Substrate contacts are provided by residues 49-52, Ser109, 114-116, and Gln120; these read TCNR and EPQ. The active-site Nucleophile is Cys50. Residue 189 to 194 coordinates NADP(+); that stretch reads GAGEMC.

The protein belongs to the glutamyl-tRNA reductase family. Homodimer.

It catalyses the reaction (S)-4-amino-5-oxopentanoate + tRNA(Glu) + NADP(+) = L-glutamyl-tRNA(Glu) + NADPH + H(+). The protein operates within porphyrin-containing compound metabolism; protoporphyrin-IX biosynthesis; 5-aminolevulinate from L-glutamyl-tRNA(Glu): step 1/2. Its function is as follows. Catalyzes the NADPH-dependent reduction of glutamyl-tRNA(Glu) to glutamate 1-semialdehyde (GSA). This Geobacter metallireducens (strain ATCC 53774 / DSM 7210 / GS-15) protein is Glutamyl-tRNA reductase.